Reading from the N-terminus, the 190-residue chain is Ferric nitrobindin-like protein (190 aa).

A GXWXGXG motif is present at residues 20–26 (GNWAGAG).

It belongs to the nitrobindin family.

The chain is Ferric nitrobindin-like protein from Streptomyces griseus subsp. griseus (strain JCM 4626 / CBS 651.72 / NBRC 13350 / KCC S-0626 / ISP 5235).